A 383-amino-acid polypeptide reads, in one-letter code: ATP phosphoribosyltransferase regulatory subunit (383 aa).

Belongs to the class-II aminoacyl-tRNA synthetase family. HisZ subfamily. As to quaternary structure, heteromultimer composed of HisG and HisZ subunits.

It localises to the cytoplasm. The protein operates within amino-acid biosynthesis; L-histidine biosynthesis; L-histidine from 5-phospho-alpha-D-ribose 1-diphosphate: step 1/9. In terms of biological role, required for the first step of histidine biosynthesis. May allow the feedback regulation of ATP phosphoribosyltransferase activity by histidine. This Neisseria meningitidis serogroup C / serotype 2a (strain ATCC 700532 / DSM 15464 / FAM18) protein is ATP phosphoribosyltransferase regulatory subunit.